The sequence spans 375 residues: Succinyl-diaminopimelate desuccinylase (375 aa).

H66 contributes to the Zn(2+) binding site. The active site involves D68. D99 serves as a coordination point for Zn(2+). E133 functions as the Proton acceptor in the catalytic mechanism. Residues E134, E162, and H348 each contribute to the Zn(2+) site.

Belongs to the peptidase M20A family. DapE subfamily. As to quaternary structure, homodimer. It depends on Zn(2+) as a cofactor. Co(2+) serves as cofactor.

It catalyses the reaction N-succinyl-(2S,6S)-2,6-diaminopimelate + H2O = (2S,6S)-2,6-diaminopimelate + succinate. It participates in amino-acid biosynthesis; L-lysine biosynthesis via DAP pathway; LL-2,6-diaminopimelate from (S)-tetrahydrodipicolinate (succinylase route): step 3/3. Its function is as follows. Catalyzes the hydrolysis of N-succinyl-L,L-diaminopimelic acid (SDAP), forming succinate and LL-2,6-diaminopimelate (DAP), an intermediate involved in the bacterial biosynthesis of lysine and meso-diaminopimelic acid, an essential component of bacterial cell walls. The chain is Succinyl-diaminopimelate desuccinylase from Pectobacterium atrosepticum (strain SCRI 1043 / ATCC BAA-672) (Erwinia carotovora subsp. atroseptica).